A 696-amino-acid chain; its full sequence is DNA-directed RNA polymerase subunit beta' (696 aa).

The Zn(2+) site is built by C69, C71, C87, and C90. Mg(2+) contacts are provided by D504, D506, and D508.

Belongs to the RNA polymerase beta' chain family. RpoC1 subfamily. In plastids the minimal PEP RNA polymerase catalytic core is composed of four subunits: alpha, beta, beta', and beta''. When a (nuclear-encoded) sigma factor is associated with the core the holoenzyme is formed, which can initiate transcription. Mg(2+) is required as a cofactor. The cofactor is Zn(2+).

It is found in the plastid. Its subcellular location is the chloroplast. It carries out the reaction RNA(n) + a ribonucleoside 5'-triphosphate = RNA(n+1) + diphosphate. Its function is as follows. DNA-dependent RNA polymerase catalyzes the transcription of DNA into RNA using the four ribonucleoside triphosphates as substrates. This is DNA-directed RNA polymerase subunit beta' from Pinus koraiensis (Korean pine).